The following is an 890-amino-acid chain: Alanine--tRNA ligase (890 aa).

Positions 572, 576, 674, and 678 each coordinate Zn(2+).

The protein belongs to the class-II aminoacyl-tRNA synthetase family. Zn(2+) serves as cofactor.

It is found in the cytoplasm. It carries out the reaction tRNA(Ala) + L-alanine + ATP = L-alanyl-tRNA(Ala) + AMP + diphosphate. Functionally, catalyzes the attachment of alanine to tRNA(Ala) in a two-step reaction: alanine is first activated by ATP to form Ala-AMP and then transferred to the acceptor end of tRNA(Ala). Also edits incorrectly charged Ser-tRNA(Ala) and Gly-tRNA(Ala) via its editing domain. The sequence is that of Alanine--tRNA ligase from Saccharopolyspora erythraea (strain ATCC 11635 / DSM 40517 / JCM 4748 / NBRC 13426 / NCIMB 8594 / NRRL 2338).